We begin with the raw amino-acid sequence, 140 residues long: UPF0179 protein Msp_0996 (140 aa).

This sequence belongs to the UPF0179 family.

This Methanosphaera stadtmanae (strain ATCC 43021 / DSM 3091 / JCM 11832 / MCB-3) protein is UPF0179 protein Msp_0996.